The chain runs to 377 residues: Outer membrane porin N (377 aa).

The N-terminal stretch at 1-21 (MKSKVLALLIPALLAAGAAHA) is a signal peptide. Residues 175–189 (NNEGASNGQEGTNNG) show a composition bias toward polar residues. The interval 175 to 196 (NNEGASNGQEGTNNGRDVRHEN) is disordered.

Belongs to the Gram-negative porin family. In terms of assembly, homotrimer.

It is found in the cell outer membrane. Functionally, forms pores that allow passive diffusion of small molecules across the outer membrane. Non-specific porin. The chain is Outer membrane porin N (ompN) from Escherichia coli (strain K12).